A 305-amino-acid polypeptide reads, in one-letter code: Carbamate kinase (305 aa).

This sequence belongs to the carbamate kinase family.

It is found in the cytoplasm. The enzyme catalyses hydrogencarbonate + NH4(+) + ATP = carbamoyl phosphate + ADP + H2O + H(+). Its pathway is metabolic intermediate metabolism; carbamoyl phosphate degradation; CO(2) and NH(3) from carbamoyl phosphate: step 1/1. This chain is Carbamate kinase (arcC), found in Thermoplasma volcanium (strain ATCC 51530 / DSM 4299 / JCM 9571 / NBRC 15438 / GSS1).